Here is a 451-residue protein sequence, read N- to C-terminus: NADH-quinone oxidoreductase subunit D (451 aa).

The protein belongs to the complex I 49 kDa subunit family. As to quaternary structure, NDH-1 is composed of 14 different subunits. Subunits NuoB, C, D, E, F, and G constitute the peripheral sector of the complex.

It localises to the cell membrane. It catalyses the reaction a quinone + NADH + 5 H(+)(in) = a quinol + NAD(+) + 4 H(+)(out). Its function is as follows. NDH-1 shuttles electrons from NADH, via FMN and iron-sulfur (Fe-S) centers, to quinones in the respiratory chain. The immediate electron acceptor for the enzyme in this species is believed to be a menaquinone. Couples the redox reaction to proton translocation (for every two electrons transferred, four hydrogen ions are translocated across the cytoplasmic membrane), and thus conserves the redox energy in a proton gradient. The chain is NADH-quinone oxidoreductase subunit D from Mycolicibacterium gilvum (strain PYR-GCK) (Mycobacterium gilvum (strain PYR-GCK)).